We begin with the raw amino-acid sequence, 133 residues long: Nucleoid-associated protein Mb3743c (133 aa).

Residues glycine 98 to isoleucine 133 are disordered. Residues proline 102–proline 113 show a composition bias toward pro residues.

The protein belongs to the YbaB/EbfC family. Homodimer.

It localises to the cytoplasm. Its subcellular location is the nucleoid. Functionally, binds to DNA and alters its conformation. May be involved in regulation of gene expression, nucleoid organization and DNA protection. This Mycobacterium bovis (strain ATCC BAA-935 / AF2122/97) protein is Nucleoid-associated protein Mb3743c.